The primary structure comprises 107 residues: Thioredoxin 1 (107 aa).

The Thioredoxin domain maps to 2-107; it reads SVAAAVTDAT…TLANTLDKHL (106 aa). Cysteine 32 and cysteine 35 are disulfide-bonded.

It belongs to the thioredoxin family.

In terms of biological role, participates in various redox reactions through the reversible oxidation of its active center dithiol to a disulfide and catalyzes dithiol-disulfide exchange reactions. In Synechococcus elongatus (strain ATCC 33912 / PCC 7942 / FACHB-805) (Anacystis nidulans R2), this protein is Thioredoxin 1 (trxA).